Consider the following 382-residue polypeptide: uncharacterized protein (382 aa).

Transmembrane regions (helical) follow at residues 14 to 34 (GLLL…LWLA), 45 to 65 (VVSS…GYVI), 79 to 99 (FIFA…SWLA), 102 to 122 (FVAG…LMCS), 131 to 151 (LLAA…LLVS), 157 to 177 (LMSV…PLLF), 204 to 224 (LGVN…GLMP), 235 to 255 (ASIG…QWPI), 270 to 290 (VQVF…AMAP), 291 to 311 (ALFI…AWAC), 325 to 345 (ALLL…AMLM), and 348 to 368 (FSDN…LLML).

Belongs to the major facilitator superfamily. YcaD (TC 2.A.1.26) family.

It is found in the cell inner membrane. This is an uncharacterized protein from Shigella flexneri serotype 5b (strain 8401).